Reading from the N-terminus, the 596-residue chain is Transketolase-like protein 1 (596 aa).

Histidine 46 lines the substrate pocket. Thiamine diphosphate contacts are provided by residues serine 49 and 94–96; that span reads GWL. Aspartate 126 contacts Mg(2+). 2 residues coordinate thiamine diphosphate: glycine 127 and asparagine 156. 2 residues coordinate Mg(2+): asparagine 156 and leucine 158. The thiamine diphosphate site is built by lysine 218 and histidine 232. Residues histidine 232, arginine 292, and serine 319 each coordinate substrate. Glutamate 340 and phenylalanine 366 together coordinate thiamine diphosphate. Glutamate 340 (proton donor) is an active-site residue. Substrate contacts are provided by histidine 390 and aspartate 398. Residue glutamine 402 participates in thiamine diphosphate binding. Position 448 (arginine 448) interacts with substrate.

Belongs to the transketolase family. In terms of assembly, homodimer. Mg(2+) is required as a cofactor. Requires Ca(2+) as cofactor. Mn(2+) serves as cofactor. It depends on Co(2+) as a cofactor. The cofactor is thiamine diphosphate. In terms of tissue distribution, widely expressed. Expressed in endothelial cells and in peripheral neurons (at protein level). Not expressed in fetal neocortex. As to expression, expressed in fetal neocortex.

It is found in the cytoplasm. The enzyme catalyses D-sedoheptulose 7-phosphate + D-glyceraldehyde 3-phosphate = aldehydo-D-ribose 5-phosphate + D-xylulose 5-phosphate. Functionally, catalyzes the transfer of a two-carbon ketol group from a ketose donor to an aldose acceptor, via a covalent intermediate with the cofactor thiamine pyrophosphate. In terms of biological role, during fetal neocortex development, may be essential to maintain the full number of basal radial glia (bRG). bRG are neural progenitor cells that undergo asymmetric divisions, generating a bRG (self-renewal) and a neuron, in contrast to basal intermediate progenitors (bIPs), which typically divide once to give rise to 2 neurons. bRG generate more cortical neurons over time than bIPs. The polypeptide is Transketolase-like protein 1 (TKTL1) (Homo sapiens (Human)).